A 361-amino-acid chain; its full sequence is Alternative oxidase, mitochondrial (361 aa).

Residues 156–178 (YLVRNVFLESVAGVPGMVAGMLR) traverse the membrane as a helical segment. Glutamate 164, glutamate 203, and histidine 206 together coordinate Fe cation. Residues 218 to 240 (WFMRLAVLGAQGVFFNAMFLSYL) traverse the membrane as a helical segment. Fe cation-binding residues include glutamate 254, glutamate 309, and histidine 312. The segment covering 318 to 328 (TLGNLDQNSDP) has biased composition (polar residues). The disordered stretch occupies residues 318–361 (TLGNLDQNSDPNPYASKYDNPNVPHPRKDIKYLKPSGWEREEVM). Residues 343 to 361 (PRKDIKYLKPSGWEREEVM) show a composition bias toward basic and acidic residues.

It belongs to the alternative oxidase family. Requires Fe cation as cofactor.

It is found in the mitochondrion inner membrane. In terms of biological role, catalyzes cyanide-resistant oxygen consumption. May increase respiration when the cytochrome respiratory pathway is restricted, or in response to low temperatures. This Venturia inaequalis (Apple scab fungus) protein is Alternative oxidase, mitochondrial (AOX1).